Consider the following 753-residue polypeptide: 5-methyltetrahydropteroyltriglutamate--homocysteine methyltransferase (753 aa).

Residues 17–20 (RELK) and Lys-117 contribute to the 5-methyltetrahydropteroyltri-L-glutamate site. L-homocysteine is bound by residues 431-433 (IGS) and Glu-484. Residues 431–433 (IGS) and Glu-484 each bind L-methionine. 5-methyltetrahydropteroyltri-L-glutamate-binding positions include 515–516 (RC) and Trp-561. L-homocysteine is bound at residue Asp-599. Asp-599 serves as a coordination point for L-methionine. Glu-605 contacts 5-methyltetrahydropteroyltri-L-glutamate. His-641, Cys-643, and Glu-665 together coordinate Zn(2+). The active-site Proton donor is His-694. Residue Cys-726 participates in Zn(2+) binding.

It belongs to the vitamin-B12 independent methionine synthase family. It depends on Zn(2+) as a cofactor.

It catalyses the reaction 5-methyltetrahydropteroyltri-L-glutamate + L-homocysteine = tetrahydropteroyltri-L-glutamate + L-methionine. The protein operates within amino-acid biosynthesis; L-methionine biosynthesis via de novo pathway; L-methionine from L-homocysteine (MetE route): step 1/1. In terms of biological role, catalyzes the transfer of a methyl group from 5-methyltetrahydrofolate to homocysteine resulting in methionine formation. The sequence is that of 5-methyltetrahydropteroyltriglutamate--homocysteine methyltransferase from Escherichia coli O9:H4 (strain HS).